Consider the following 400-residue polypeptide: Nicotinate phosphoribosyltransferase (400 aa).

Phosphohistidine; by autocatalysis is present on His-220.

The protein belongs to the NAPRTase family. Post-translationally, transiently phosphorylated on a His residue during the reaction cycle. Phosphorylation strongly increases the affinity for substrates and increases the rate of nicotinate D-ribonucleotide production. Dephosphorylation regenerates the low-affinity form of the enzyme, leading to product release.

The enzyme catalyses nicotinate + 5-phospho-alpha-D-ribose 1-diphosphate + ATP + H2O = nicotinate beta-D-ribonucleotide + ADP + phosphate + diphosphate. The protein operates within cofactor biosynthesis; NAD(+) biosynthesis; nicotinate D-ribonucleotide from nicotinate: step 1/1. Its function is as follows. Catalyzes the synthesis of beta-nicotinate D-ribonucleotide from nicotinate and 5-phospho-D-ribose 1-phosphate at the expense of ATP. The polypeptide is Nicotinate phosphoribosyltransferase (Cronobacter sakazakii (strain ATCC BAA-894) (Enterobacter sakazakii)).